The sequence spans 75 residues: Large ribosomal subunit protein bL28 (75 aa).

It belongs to the bacterial ribosomal protein bL28 family.

This is Large ribosomal subunit protein bL28 from Baumannia cicadellinicola subsp. Homalodisca coagulata.